The primary structure comprises 509 residues: Transcription factor atf-7 (509 aa).

Over residues 283–303 the composition is skewed to polar residues; sequence TVSSYHSPLGASSQPPSTQKS. 2 disordered regions span residues 283 to 318 and 337 to 400; these read TVSS…EKQI and NMSS…ILER. The span at 308 to 318 shows a compositional bias: basic and acidic residues; that stretch reads SWDHINGEKQI. Over residues 337 to 364 the composition is skewed to low complexity; it reads NMSSSGSDQDQSADMSNAGSTASTSTGN. Basic and acidic residues predominate over residues 390–400; it reads PDERRNTILER. The 74-residue stretch at 391–464 folds into the bZIP domain; the sequence is DERRNTILER…TERESRCVCL (74 aa). The interval 393–413 is basic motif; it reads RRNTILERNKAAAVRYRKRKK. A leucine-zipper region spans residues 419–450; the sequence is MMGRVQAMEAEKNQLLAIQTQNQVLRRELERV.

The protein belongs to the bZIP family. Interacts with serine/threonine kinase pmk-1; perhaps in a manner dependent on dual specificity protein kinase sek-1. In terms of tissue distribution, expressed in intestinal cells.

It is found in the nucleus. The protein localises to the chromosome. Transcription factor which regulates the transcription of various genes, including those involved in innate immunity and oxidative stress responses. Binds to promoter regions of genes, probably at 5'-[GACGTCA]-3' consensus sequences. Together with transcription factor daf-19, involved in regulation of the serotonergic response of ADF neurons to pathogenic food. Modulates response to infection by the Gram-negative bacterium P.aeruginosa, acting downstream of the p38 signal transduction pathway effector serine/threonine kinase pmk-1. May act with transcription factor elt-2 to control p38 gene induction in response to bacterial infection. May be phosphorylated by pmk-1. Regulates transcription of the metallothionein gene, mtl-1, perhaps acting downstream of pmk-1. The chain is Transcription factor atf-7 from Caenorhabditis elegans.